Here is a 503-residue protein sequence, read N- to C-terminus: Cytochrome P450 monooxygenase lnbC (503 aa).

Residues 14-34 (VVLLLSSVWIAVHLVLAAYNV) form a helical membrane-spanning segment. N-linked (GlcNAc...) asparagine glycans are attached at residues N94 and N169. Heme is bound at residue C446.

It belongs to the cytochrome P450 family. It depends on heme as a cofactor.

It localises to the membrane. Its pathway is secondary metabolite biosynthesis. Cytochrome P450 monooxygenase; part of the lnb gene cluster that mediates the biosynthesis of diastereomeric piperazines. Lna and lnb clusters encode sets of enzymes that produce overlapping sets of previously undescribed metabolites such as piperazinomycin-like metabolites or morpholine. The lna and lnb biosynthetic pathways appear to be part of a signaling network that controls the formation of sclerotia, a resilient overwintering structure. One primary function of the non-canonical nonribosomal peptide synthetases lnaA and lnbA consists in the reduction of L-tyrosine. The presence in the clusters of tailoring enzymes such as the oxidoreductases lnaB, lnbB, lnaE or lnbE, as well as of the cytochrome P450 monooxygenases lnaC, lnaD, or lnbC, might explain formation of various diastereomeric piperazines. In Aspergillus flavus (strain ATCC 200026 / FGSC A1120 / IAM 13836 / NRRL 3357 / JCM 12722 / SRRC 167), this protein is Cytochrome P450 monooxygenase lnbC.